Reading from the N-terminus, the 361-residue chain is Phosphoserine aminotransferase (361 aa).

Arg43 contacts L-glutamate. Pyridoxal 5'-phosphate is bound by residues 77–78, Trp103, Thr153, Asp172, and Gln195; that span reads AS. Lys196 carries the post-translational modification N6-(pyridoxal phosphate)lysine. Residue 237–238 coordinates pyridoxal 5'-phosphate; the sequence is NT.

The protein belongs to the class-V pyridoxal-phosphate-dependent aminotransferase family. SerC subfamily. As to quaternary structure, homodimer. The cofactor is pyridoxal 5'-phosphate.

The protein localises to the cytoplasm. The enzyme catalyses O-phospho-L-serine + 2-oxoglutarate = 3-phosphooxypyruvate + L-glutamate. It catalyses the reaction 4-(phosphooxy)-L-threonine + 2-oxoglutarate = (R)-3-hydroxy-2-oxo-4-phosphooxybutanoate + L-glutamate. It functions in the pathway amino-acid biosynthesis; L-serine biosynthesis; L-serine from 3-phospho-D-glycerate: step 2/3. It participates in cofactor biosynthesis; pyridoxine 5'-phosphate biosynthesis; pyridoxine 5'-phosphate from D-erythrose 4-phosphate: step 3/5. Functionally, catalyzes the reversible conversion of 3-phosphohydroxypyruvate to phosphoserine and of 3-hydroxy-2-oxo-4-phosphonooxybutanoate to phosphohydroxythreonine. In Desulfotalea psychrophila (strain LSv54 / DSM 12343), this protein is Phosphoserine aminotransferase.